Reading from the N-terminus, the 520-residue chain is GMP synthase [glutamine-hydrolyzing] (520 aa).

In terms of domain architecture, Glutamine amidotransferase type-1 spans 9–202 (TVLIVDFGSQ…VHKIAGIKGD (194 aa)). The active-site Nucleophile is the Cys86. Active-site residues include His176 and Glu178. Residues 203 to 395 (WTMSAYRAKA…LGLPESFIGR (193 aa)) form the GMPS ATP-PPase domain. 230–236 (SGGVDSS) provides a ligand contact to ATP.

Homodimer.

It catalyses the reaction XMP + L-glutamine + ATP + H2O = GMP + L-glutamate + AMP + diphosphate + 2 H(+). The protein operates within purine metabolism; GMP biosynthesis; GMP from XMP (L-Gln route): step 1/1. Its function is as follows. Catalyzes the synthesis of GMP from XMP. This chain is GMP synthase [glutamine-hydrolyzing], found in Sinorhizobium fredii (strain NBRC 101917 / NGR234).